The primary structure comprises 153 residues: Large ribosomal subunit protein uL29 (153 aa).

A large ribosomal subunit protein uL29 region spans residues 1-83; sequence MNKELRAKTN…KEQTKQKEIQ (83 aa). The segment at 84-153 is unknown; sequence ESVKKIKQLR…NVKAKTKKKG (70 aa). The segment covering 100 to 121 has biased composition (basic and acidic residues); that stretch reads NKEKRLANAEKVKAAPKPEQKT. Residues 100-153 form a disordered region; the sequence is NKEKRLANAEKVKAAPKPEQKTKKVKKAPKKTETVKPTTNKNKKNVKAKTKKKG. Basic residues predominate over residues 140 to 153; sequence KNKKNVKAKTKKKG.

The protein belongs to the universal ribosomal protein uL29 family.

The protein is Large ribosomal subunit protein uL29 of Mycoplasmoides gallisepticum (strain R(low / passage 15 / clone 2)) (Mycoplasma gallisepticum).